A 412-amino-acid polypeptide reads, in one-letter code: Adenosine receptor A2a (412 aa).

Residues 1–7 (MPTVGSL) lie on the Extracellular side of the membrane. The helical transmembrane segment at 8–32 (VYIMVELAIALLAILGNMLVCWAVW) threads the bilayer. Residues 33 to 42 (LNSNLQNVTN) lie on the Cytoplasmic side of the membrane. Residues 43–66 (YFVVSLAAADIAVGVLAIPFAITI) form a helical membrane-spanning segment. The Extracellular portion of the chain corresponds to 67–77 (STGFCAACHGC). 3 cysteine pairs are disulfide-bonded: cysteine 71–cysteine 159, cysteine 74–cysteine 146, and cysteine 77–cysteine 166. The chain crosses the membrane as a helical span at residues 78–100 (LFIACFVLVLTQSSIFSLLAIAI). At 101–120 (DRYIAIRIPLRYNGLVTGTR) the chain is on the cytoplasmic side. A helical membrane pass occupies residues 121 to 143 (AKGVIAVCWVLSFAIGLTPMLGW). The Extracellular portion of the chain corresponds to 144 to 173 (NNCHHWGEGENQSQGCGEGQVACLFEDVVP). A glycan (N-linked (GlcNAc...) asparagine) is linked at asparagine 154. Glutamate 169 contacts adenosine. A helical membrane pass occupies residues 174–198 (MNYMVYYNFFACVLVPLLLMLGVYL). At 199-234 (RIFLAARRQLKQMETQPLPGERARSTLQKEVHAAKS) the chain is on the cytoplasmic side. Residues 235–258 (LAIIVGLFALCWLPLHIINCFTFF) form a helical membrane-spanning segment. Position 253 (asparagine 253) interacts with adenosine. An intrachain disulfide couples cysteine 259 to cysteine 262. At 259-266 (CPECPHAP) the chain is on the extracellular side. Residues 267–290 (LWLMYPAIILSHFNSVVNPFIYAY) form a helical membrane-spanning segment. Residues serine 277 and histidine 278 each coordinate adenosine. At 291 to 412 (RIREFRHTFH…PLAQDGAGVS (122 aa)) the chain is on the cytoplasmic side. The disordered stretch occupies residues 368-412 (RASARESPGDTGLPDVELLSHELHGASPESPGLEGPLAQDGAGVS).

The protein belongs to the G-protein coupled receptor 1 family. As to quaternary structure, interacts (via cytoplasmic C-terminal domain) with USP4; the interaction is direct. May interact with DRD4. Interacts with NECAB2. Interacts (via cytoplasmic C-terminal domain) with GAS2L2; interaction enhances receptor-mediated adenylyl cyclase activity. Ubiquitinated. Deubiquitinated by USP4; leading to stabilization and expression at the cell surface.

It is found in the cell membrane. Functionally, receptor for adenosine. The activity of this receptor is mediated by G proteins which activate adenylyl cyclase. The protein is Adenosine receptor A2a (ADORA2A) of Equus caballus (Horse).